Consider the following 34-residue polypeptide: Ribonuclease PL1 (34 aa).

N-linked (GlcNAc...) asparagine; partial glycosylation is present at asparagine 4. The active-site Proton acceptor is histidine 15.

Belongs to the pancreatic ribonuclease family.

The protein resides in the lysosome. The catalysed reaction is an [RNA] containing cytidine + H2O = an [RNA]-3'-cytidine-3'-phosphate + a 5'-hydroxy-ribonucleotide-3'-[RNA].. It carries out the reaction an [RNA] containing uridine + H2O = an [RNA]-3'-uridine-3'-phosphate + a 5'-hydroxy-ribonucleotide-3'-[RNA].. This is Ribonuclease PL1 from Sus scrofa (Pig).